Reading from the N-terminus, the 83-residue chain is U5-theraphotoxin-Hs1c (83 aa).

The first 21 residues, methionine 1–alanine 21, serve as a signal peptide directing secretion. Positions serine 22–arginine 49 are excised as a propeptide. 3 cysteine pairs are disulfide-bonded: cysteine 51/cysteine 63, cysteine 56/cysteine 68, and cysteine 62/cysteine 75.

The protein belongs to the neurotoxin 10 (Hwtx-1) family. 51 (Hntx-8) subfamily. Hntx-8 sub-subfamily. In terms of tissue distribution, expressed by the venom gland.

It is found in the secreted. Functionally, agglutinates erythrocytes. The chain is U5-theraphotoxin-Hs1c from Cyriopagopus schmidti (Chinese bird spider).